The chain runs to 480 residues: uncharacterized protein (480 aa).

The PUA domain occupies Lys131–Lys207.

The protein in the C-terminal section; belongs to the PAPS reductase family.

This is an uncharacterized protein from Methanocaldococcus jannaschii (strain ATCC 43067 / DSM 2661 / JAL-1 / JCM 10045 / NBRC 100440) (Methanococcus jannaschii).